We begin with the raw amino-acid sequence, 30 residues long: Thylakoid lumenal 17 kDa protein (30 aa).

Its subcellular location is the plastid. The protein localises to the chloroplast thylakoid lumen. This chain is Thylakoid lumenal 17 kDa protein, found in Spinacia oleracea (Spinach).